Here is a 20-residue protein sequence, read N- to C-terminus: Cytochrome c oxidase subunit 7B-liver, mitochondrial (20 aa).

It belongs to the cytochrome c oxidase VIIb family. As to quaternary structure, component of the cytochrome c oxidase (complex IV, CIV), a multisubunit enzyme composed of 14 subunits. The complex is composed of a catalytic core of 3 subunits MT-CO1, MT-CO2 and MT-CO3, encoded in the mitochondrial DNA, and 11 supernumerary subunits COX4I, COX5A, COX5B, COX6A, COX6B, COX6C, COX7A, COX7B, COX7C, COX8 and NDUFA4, which are encoded in the nuclear genome. The complex exists as a monomer or a dimer and forms supercomplexes (SCs) in the inner mitochondrial membrane with NADH-ubiquinone oxidoreductase (complex I, CI) and ubiquinol-cytochrome c oxidoreductase (cytochrome b-c1 complex, complex III, CIII), resulting in different assemblies (supercomplex SCI(1)III(2)IV(1) and megacomplex MCI(2)III(2)IV(2)).

It is found in the mitochondrion inner membrane. The catalysed reaction is 4 Fe(II)-[cytochrome c] + O2 + 8 H(+)(in) = 4 Fe(III)-[cytochrome c] + 2 H2O + 4 H(+)(out). It participates in energy metabolism; oxidative phosphorylation. Its function is as follows. Component of the cytochrome c oxidase, the last enzyme in the mitochondrial electron transport chain which drives oxidative phosphorylation. The respiratory chain contains 3 multisubunit complexes succinate dehydrogenase (complex II, CII), ubiquinol-cytochrome c oxidoreductase (cytochrome b-c1 complex, complex III, CIII) and cytochrome c oxidase (complex IV, CIV), that cooperate to transfer electrons derived from NADH and succinate to molecular oxygen, creating an electrochemical gradient over the inner membrane that drives transmembrane transport and the ATP synthase. Cytochrome c oxidase is the component of the respiratory chain that catalyzes the reduction of oxygen to water. Electrons originating from reduced cytochrome c in the intermembrane space (IMS) are transferred via the dinuclear copper A center (CU(A)) of subunit 2 and heme A of subunit 1 to the active site in subunit 1, a binuclear center (BNC) formed by heme A3 and copper B (CU(B)). The BNC reduces molecular oxygen to 2 water molecules using 4 electrons from cytochrome c in the IMS and 4 protons from the mitochondrial matrix. In Thunnus obesus (Bigeye tuna), this protein is Cytochrome c oxidase subunit 7B-liver, mitochondrial.